The chain runs to 952 residues: Anion exchange protein 4 (952 aa).

The interval 1 to 41 (MKLPGQGDFESSDAHENAHSEEPDSGLGPGPGLNGPSGIDI) is disordered. The segment covering 12-22 (SDAHENAHSEE) has biased composition (basic and acidic residues). 4 helical membrane passes run 385–405 (AVFYIYLATVTNAITFGGLLG), 413–433 (GVLESFLGTAVAGAAFCLMAG), 470–490 (VGIWVTAFCLALVATEASLLV), and 501–521 (FCALISLIFIYDAMGKMLNLI). Residues N546 and N569 are each glycosylated (N-linked (GlcNAc...) asparagine). 7 helical membrane passes run 593-613 (VPDIAFFSLLLFFTSFLCAIA), 634-654 (FSSVLAILLGCGLDTFLGLAT), 681-701 (PWWLSVAAALPALLLSILIFM), 727-747 (LFCVAVLMLFTSALGLPWYVS), 784-804 (GLVVFVLTGVSIFLAPVLKFI), 807-827 (PVLYGIFLYMGVAALSSIQFV), and 870-890 (VVKSTPAAIVFPLMLLGLVAI). Residues 915–938 (ETIPENRSEPEHLFSGNDSEDSEL) are disordered. N-linked (GlcNAc...) asparagine glycosylation is found at N920, N931, and N948.

This sequence belongs to the anion exchanger (TC 2.A.31) family. In terms of tissue distribution, expressed in submandibular gland (SMG) duct and cortical collecting duct (CCD) of kidney. Lower expressed in duodenal villi.

Its subcellular location is the basolateral cell membrane. The catalysed reaction is 2 hydrogencarbonate(out) + chloride(in) + Na(+)(out) = 2 hydrogencarbonate(in) + chloride(out) + Na(+)(in). The enzyme catalyses K(+)(in) + 2 hydrogencarbonate(in) + chloride(out) = K(+)(out) + 2 hydrogencarbonate(out) + chloride(in). It carries out the reaction Li(+)(in) + 2 hydrogencarbonate(in) + chloride(out) = Li(+)(out) + 2 hydrogencarbonate(out) + chloride(in). It catalyses the reaction Rb(+)(in) + 2 hydrogencarbonate(in) + chloride(out) = Rb(+)(out) + 2 hydrogencarbonate(out) + chloride(in). The catalysed reaction is Cs(+)(in) + 2 hydrogencarbonate(in) + chloride(out) = Cs(+)(out) + 2 hydrogencarbonate(out) + chloride(in). Cl(-)/HCO3(-) exchanger activity is substantially increased in response to 5 uM isoproterenol. Cl(-)/HCO3(-) exchanger activity is increased by both forskolin and coexpression with the catalytic subunit alpha of PKA. Electroneutral Cl(-)/HCO3(-) antiporter that favors chloride ion entry and efflux of hydrogencarbonate and sodium ion across the basolateral membrane and may participate in salivary secretion. Also mediates Cl(-)/HCO3(-) exchange activity in the presence of K(+) as well as Cs(+), Li(+), and Rb(+). Does not contribute to Cl(-)/HCO3(-) exchanger in the apical membrane of the upper villous epithelium. This is Anion exchange protein 4 from Mus musculus (Mouse).